A 455-amino-acid polypeptide reads, in one-letter code: Tubby-like F-box protein 1 (455 aa).

The region spanning 54–112 is the F-box domain; the sequence is ETPWANLPPELLRDVIKRLEESESVWPARRHVVACASVCRSWRDMCKEIVQSPELSGKI. The disordered stretch occupies residues 386–414; it reads QPQPQPQPQPQPQPLTQPQPSGQTDGPDK. Pro residues predominate over residues 388 to 402; that stretch reads QPQPQPQPQPQPLTQ.

It belongs to the TUB family. In terms of tissue distribution, ubiquitous.

This chain is Tubby-like F-box protein 1, found in Arabidopsis thaliana (Mouse-ear cress).